The following is a 421-amino-acid chain: ATP-dependent RNA helicase RhlB (421 aa).

The Q motif motif lies at 9–37 (QKFSDFALHPKVVEALEKKGFHNCTPIQA). The region spanning 40–219 (LPLTLAGRDV…FEQMNNAEYI (180 aa)) is the Helicase ATP-binding domain. 53–60 (AQTGTGKT) serves as a coordination point for ATP. The DEAD box signature appears at 165–168 (DEAD). In terms of domain architecture, Helicase C-terminal spans 245–390 (RLLQTLIEEE…VSKYNPDALM (146 aa)). Residues 392-421 (DLPKPLRLTRPRTGNGPRRTGTPRNRRRSG) form a disordered region. The segment covering 402-414 (PRTGNGPRRTGTP) has biased composition (low complexity).

This sequence belongs to the DEAD box helicase family. RhlB subfamily. As to quaternary structure, component of the RNA degradosome, which is a multiprotein complex involved in RNA processing and mRNA degradation.

Its subcellular location is the cytoplasm. The catalysed reaction is ATP + H2O = ADP + phosphate + H(+). DEAD-box RNA helicase involved in RNA degradation. Has RNA-dependent ATPase activity and unwinds double-stranded RNA. In Escherichia coli O7:K1 (strain IAI39 / ExPEC), this protein is ATP-dependent RNA helicase RhlB.